Consider the following 246-residue polypeptide: Ubiquinone/menaquinone biosynthesis C-methyltransferase UbiE (246 aa).

S-adenosyl-L-methionine contacts are provided by residues T75, D95, and 119–120; that span reads DA.

Belongs to the class I-like SAM-binding methyltransferase superfamily. MenG/UbiE family.

It carries out the reaction a 2-demethylmenaquinol + S-adenosyl-L-methionine = a menaquinol + S-adenosyl-L-homocysteine + H(+). It catalyses the reaction a 2-methoxy-6-(all-trans-polyprenyl)benzene-1,4-diol + S-adenosyl-L-methionine = a 5-methoxy-2-methyl-3-(all-trans-polyprenyl)benzene-1,4-diol + S-adenosyl-L-homocysteine + H(+). It functions in the pathway quinol/quinone metabolism; menaquinone biosynthesis; menaquinol from 1,4-dihydroxy-2-naphthoate: step 2/2. Its pathway is cofactor biosynthesis; ubiquinone biosynthesis. Functionally, methyltransferase required for the conversion of demethylmenaquinol (DMKH2) to menaquinol (MKH2) and the conversion of 2-polyprenyl-6-methoxy-1,4-benzoquinol (DDMQH2) to 2-polyprenyl-3-methyl-6-methoxy-1,4-benzoquinol (DMQH2). This is Ubiquinone/menaquinone biosynthesis C-methyltransferase UbiE from Desulfotalea psychrophila (strain LSv54 / DSM 12343).